A 252-amino-acid chain; its full sequence is Imidazole glycerol phosphate synthase subunit HisF (252 aa).

Residues Asp-11 and Asp-130 contribute to the active site.

The protein belongs to the HisA/HisF family. Heterodimer of HisH and HisF.

It localises to the cytoplasm. It carries out the reaction 5-[(5-phospho-1-deoxy-D-ribulos-1-ylimino)methylamino]-1-(5-phospho-beta-D-ribosyl)imidazole-4-carboxamide + L-glutamine = D-erythro-1-(imidazol-4-yl)glycerol 3-phosphate + 5-amino-1-(5-phospho-beta-D-ribosyl)imidazole-4-carboxamide + L-glutamate + H(+). It functions in the pathway amino-acid biosynthesis; L-histidine biosynthesis; L-histidine from 5-phospho-alpha-D-ribose 1-diphosphate: step 5/9. IGPS catalyzes the conversion of PRFAR and glutamine to IGP, AICAR and glutamate. The HisF subunit catalyzes the cyclization activity that produces IGP and AICAR from PRFAR using the ammonia provided by the HisH subunit. The chain is Imidazole glycerol phosphate synthase subunit HisF from Geobacillus sp. (strain WCH70).